A 690-amino-acid chain; its full sequence is Choline transporter-like 1 (690 aa).

A helical transmembrane segment spans residues 23 to 43 (IFWLVLYVVFWIALIVIAVFS). An N-linked (GlcNAc...) asparagine glycan is attached at Asn-134. Helical transmembrane passes span 203-223 (LYKA…FSIV), 237-259 (WLIC…WSYY), 282-302 (ATIY…LVVI), and 334-354 (LLAF…VVCL). Asn-391 carries an N-linked (GlcNAc...) asparagine glycan. A run of 4 helical transmembrane segments spans residues 415 to 435 (IYII…QLAI), 464 to 484 (LGSV…RLIL), 565 to 585 (FVLF…SILL), and 594 to 614 (FYMA…HIIL).

The protein belongs to the CTL (choline transporter-like) family.

It is found in the membrane. The polypeptide is Choline transporter-like 1 (Anopheles gambiae (African malaria mosquito)).